Reading from the N-terminus, the 352-residue chain is Biotin synthase (352 aa).

The region spanning Asn44 to Lys262 is the Radical SAM core domain. [4Fe-4S] cluster-binding residues include Cys59, Cys63, and Cys66. Cys103, Cys134, Cys194, and Arg266 together coordinate [2Fe-2S] cluster.

It belongs to the radical SAM superfamily. Biotin synthase family. In terms of assembly, homodimer. Requires [4Fe-4S] cluster as cofactor. The cofactor is [2Fe-2S] cluster.

It catalyses the reaction (4R,5S)-dethiobiotin + (sulfur carrier)-SH + 2 reduced [2Fe-2S]-[ferredoxin] + 2 S-adenosyl-L-methionine = (sulfur carrier)-H + biotin + 2 5'-deoxyadenosine + 2 L-methionine + 2 oxidized [2Fe-2S]-[ferredoxin]. It functions in the pathway cofactor biosynthesis; biotin biosynthesis; biotin from 7,8-diaminononanoate: step 2/2. Its function is as follows. Catalyzes the conversion of dethiobiotin (DTB) to biotin by the insertion of a sulfur atom into dethiobiotin via a radical-based mechanism. This Pseudomonas putida (strain W619) protein is Biotin synthase.